The primary structure comprises 234 residues: 2,3-bisphosphoglycerate-dependent phosphoglycerate mutase (234 aa).

Substrate-binding positions include 8-15 (RHGESVWN), 21-22 (TG), Arg-60, 87-90 (ERHY), Lys-98, 114-115 (RR), and 183-184 (GN). The active-site Tele-phosphohistidine intermediate is His-9. Catalysis depends on Glu-87, which acts as the Proton donor/acceptor.

This sequence belongs to the phosphoglycerate mutase family. BPG-dependent PGAM subfamily. In terms of assembly, homodimer.

The catalysed reaction is (2R)-2-phosphoglycerate = (2R)-3-phosphoglycerate. The protein operates within carbohydrate degradation; glycolysis; pyruvate from D-glyceraldehyde 3-phosphate: step 3/5. Functionally, catalyzes the interconversion of 2-phosphoglycerate and 3-phosphoglycerate. This is 2,3-bisphosphoglycerate-dependent phosphoglycerate mutase from Citrifermentans bemidjiense (strain ATCC BAA-1014 / DSM 16622 / JCM 12645 / Bem) (Geobacter bemidjiensis).